The following is a 659-amino-acid chain: RNA-binding E3 ubiquitin-protein ligase MEX3C (659 aa).

A compositionally biased stretch (low complexity) spans M1–P15. Residues M1–S140 are disordered. Pro residues predominate over residues A16 to G37. Residues E64–R82 are compositionally biased toward low complexity. Residues R83 to P94 are compositionally biased toward basic and acidic residues. S88 is subject to Phosphoserine. Acidic residues predominate over residues A104–D137. 2 KH domains span residues T232–I293 and Q326–I387. The disordered stretch occupies residues F513 to N569. Polar residues predominate over residues P526 to L544. S537 and S545 each carry phosphoserine. The segment covering S551–S562 has biased composition (basic and acidic residues). The segment at C608 to Q648 adopts an RING-type zinc-finger fold.

Interacts with USP7, which antagonizes the ability to degrade mRNA. Highest levels found in fetal brain and testis. Also expressed in thymus, salivary gland and uterus. Highly expressed in cells of the innate immune system, in particular activated NK cells. Week expression in the intestine.

It localises to the cytoplasm. The protein resides in the nucleus. It carries out the reaction S-ubiquitinyl-[E2 ubiquitin-conjugating enzyme]-L-cysteine + [acceptor protein]-L-lysine = [E2 ubiquitin-conjugating enzyme]-L-cysteine + N(6)-ubiquitinyl-[acceptor protein]-L-lysine.. E3 ubiquitin ligase responsible for the post-transcriptional regulation of common HLA-A allotypes. Binds to the 3' UTR of HLA-A2 mRNA, and regulates its levels by promoting mRNA decay. RNA binding is sufficient to prevent translation, but ubiquitin ligase activity is required for mRNA degradation. The chain is RNA-binding E3 ubiquitin-protein ligase MEX3C (MEX3C) from Homo sapiens (Human).